Here is a 360-residue protein sequence, read N- to C-terminus: Phospho-N-acetylmuramoyl-pentapeptide-transferase (360 aa).

10 helical membrane passes run 25–45 (RGIL…PWMI), 73–93 (TMGG…WADL), 97–117 (YVWV…VDDY), 132–152 (WKYF…YMTA), 168–188 (VSIP…VGSS), 199–219 (GLAI…CYLS), 236–256 (AGEL…FLWF), 263–283 (VFMG…IAVI), 288–308 (IVLF…VIQV), and 338–358 (VIVR…ATLK).

It belongs to the glycosyltransferase 4 family. MraY subfamily. It depends on Mg(2+) as a cofactor.

The protein resides in the cell inner membrane. It catalyses the reaction UDP-N-acetyl-alpha-D-muramoyl-L-alanyl-gamma-D-glutamyl-meso-2,6-diaminopimeloyl-D-alanyl-D-alanine + di-trans,octa-cis-undecaprenyl phosphate = di-trans,octa-cis-undecaprenyl diphospho-N-acetyl-alpha-D-muramoyl-L-alanyl-D-glutamyl-meso-2,6-diaminopimeloyl-D-alanyl-D-alanine + UMP. Its pathway is cell wall biogenesis; peptidoglycan biosynthesis. Catalyzes the initial step of the lipid cycle reactions in the biosynthesis of the cell wall peptidoglycan: transfers peptidoglycan precursor phospho-MurNAc-pentapeptide from UDP-MurNAc-pentapeptide onto the lipid carrier undecaprenyl phosphate, yielding undecaprenyl-pyrophosphoryl-MurNAc-pentapeptide, known as lipid I. This Pseudomonas fluorescens (strain ATCC BAA-477 / NRRL B-23932 / Pf-5) protein is Phospho-N-acetylmuramoyl-pentapeptide-transferase.